The sequence spans 41 residues: Probable cinnamyl alcohol dehydrogenase 2 (41 aa).

Belongs to the zinc-containing alcohol dehydrogenase family. Requires Zn(2+) as cofactor.

It catalyses the reaction (E)-cinnamyl alcohol + NADP(+) = (E)-cinnamaldehyde + NADPH + H(+). The enzyme catalyses (E)-coniferol + NADP(+) = (E)-coniferaldehyde + NADPH + H(+). The catalysed reaction is (E)-sinapyl alcohol + NADP(+) = (E)-sinapaldehyde + NADPH + H(+). It carries out the reaction (E)-4-coumaroyl alcohol + NADP(+) = (E)-4-coumaraldehyde + NADPH + H(+). It catalyses the reaction (E)-caffeyl alcohol + NADP(+) = (E)-caffeyl aldehyde + NADPH + H(+). The protein operates within aromatic compound metabolism; phenylpropanoid biosynthesis. Involved in lignin biosynthesis. Catalyzes the final step specific for the production of lignin monomers, like coniferyl alcohol, sinapyl alcohol and 4-coumaryl alcohol. In Pseudotsuga menziesii (Douglas-fir), this protein is Probable cinnamyl alcohol dehydrogenase 2.